Reading from the N-terminus, the 731-residue chain is 1,4-alpha-glucan branching enzyme GlgB (731 aa).

The active-site Nucleophile is Asp-411. Catalysis depends on Glu-464, which acts as the Proton donor.

It belongs to the glycosyl hydrolase 13 family. GlgB subfamily. As to quaternary structure, monomer.

The catalysed reaction is Transfers a segment of a (1-&gt;4)-alpha-D-glucan chain to a primary hydroxy group in a similar glucan chain.. It functions in the pathway glycan biosynthesis; glycogen biosynthesis. Its function is as follows. Catalyzes the formation of the alpha-1,6-glucosidic linkages in glycogen by scission of a 1,4-alpha-linked oligosaccharide from growing alpha-1,4-glucan chains and the subsequent attachment of the oligosaccharide to the alpha-1,6 position. This chain is 1,4-alpha-glucan branching enzyme GlgB, found in Mycobacterium bovis (strain ATCC BAA-935 / AF2122/97).